A 340-amino-acid chain; its full sequence is Spermidine synthase 2 (340 aa).

The segment at 1–41 is disordered; sequence MSSTQEASVTDLPVKRPREAEEDNNGGAMETENGGGEIKEP. Serine 2 carries the post-translational modification N-acetylserine. The 238-residue stretch at 49–286 folds into the PABS domain; that stretch reads PGWFSEISPM…GVIGFMLCSS (238 aa). Glutamine 80 provides a ligand contact to S-adenosyl 3-(methylsulfanyl)propylamine. A putrescine-binding site is contributed by tyrosine 110. Residues glutamine 111, aspartate 135, glutamate 155, 186–187, and aspartate 205 contribute to the S-adenosyl 3-(methylsulfanyl)propylamine site; that span reads DG. Catalysis depends on aspartate 205, which acts as the Proton acceptor. Putrescine contacts are provided by residues 205–208 and tyrosine 274; that span reads DSSD.

The protein belongs to the spermidine/spermine synthase family. Heterodimer. Component of a multiprotein complex. Interacts with SPMS and SPDSYN1.

It carries out the reaction S-adenosyl 3-(methylsulfanyl)propylamine + putrescine = S-methyl-5'-thioadenosine + spermidine + H(+). It functions in the pathway amine and polyamine biosynthesis; spermidine biosynthesis; spermidine from putrescine: step 1/1. In Arabidopsis thaliana (Mouse-ear cress), this protein is Spermidine synthase 2 (SPDSYN2).